Reading from the N-terminus, the 361-residue chain is Putative F-box protein At3g25460 (361 aa).

One can recognise an F-box domain in the interval 1–45 (MMMPELPEDLLVEILCRVPATSLKRLRSTCKLWNHLYNDKRFKSK).

In Arabidopsis thaliana (Mouse-ear cress), this protein is Putative F-box protein At3g25460.